We begin with the raw amino-acid sequence, 165 residues long: Crossover junction endodeoxyribonuclease RuvC (165 aa).

Catalysis depends on residues aspartate 8, glutamate 69, and histidine 141. The Mg(2+) site is built by aspartate 8, glutamate 69, and histidine 141.

This sequence belongs to the RuvC family. Homodimer which binds Holliday junction (HJ) DNA. The HJ becomes 2-fold symmetrical on binding to RuvC with unstacked arms; it has a different conformation from HJ DNA in complex with RuvA. In the full resolvosome a probable DNA-RuvA(4)-RuvB(12)-RuvC(2) complex forms which resolves the HJ. Requires Mg(2+) as cofactor.

It localises to the cytoplasm. It catalyses the reaction Endonucleolytic cleavage at a junction such as a reciprocal single-stranded crossover between two homologous DNA duplexes (Holliday junction).. In terms of biological role, the RuvA-RuvB-RuvC complex processes Holliday junction (HJ) DNA during genetic recombination and DNA repair. Endonuclease that resolves HJ intermediates. Cleaves cruciform DNA by making single-stranded nicks across the HJ at symmetrical positions within the homologous arms, yielding a 5'-phosphate and a 3'-hydroxyl group; requires a central core of homology in the junction. The consensus cleavage sequence is 5'-(A/T)TT(C/G)-3'. Cleavage occurs on the 3'-side of the TT dinucleotide at the point of strand exchange. HJ branch migration catalyzed by RuvA-RuvB allows RuvC to scan DNA until it finds its consensus sequence, where it cleaves and resolves the cruciform DNA. The chain is Crossover junction endodeoxyribonuclease RuvC from Wolbachia pipientis subsp. Culex pipiens (strain wPip).